The chain runs to 666 residues: Long-chain-fatty-acid--CoA ligase ACSBG2 (666 aa).

ATP-binding positions include 230–238, 418–423, Asp496, and Arg624; these read TSGTTGIPK and ELYGLS.

The protein belongs to the ATP-dependent AMP-binding enzyme family. Bubblegum subfamily. As to expression, testis-specific.

The protein resides in the cytoplasm. The protein localises to the membrane. It carries out the reaction a long-chain fatty acid + ATP + CoA = a long-chain fatty acyl-CoA + AMP + diphosphate. It catalyses the reaction (5Z,8Z,11Z,14Z)-eicosatetraenoate + ATP + CoA = (5Z,8Z,11Z,14Z)-eicosatetraenoyl-CoA + AMP + diphosphate. The enzyme catalyses hexadecanoate + ATP + CoA = hexadecanoyl-CoA + AMP + diphosphate. The catalysed reaction is (9Z)-octadecenoate + ATP + CoA = (9Z)-octadecenoyl-CoA + AMP + diphosphate. It carries out the reaction (9Z,12Z)-octadecadienoate + ATP + CoA = (9Z,12Z)-octadecadienoyl-CoA + AMP + diphosphate. It catalyses the reaction tetracosanoate + ATP + CoA = tetracosanoyl-CoA + AMP + diphosphate. Catalyzes the conversion of fatty acids such as long chain and very long-chain fatty acids to their active form acyl-CoAs for both synthesis of cellular lipids, and degradation via beta-oxidation. Can activate diverse saturated, monosaturated and polyunsaturated fatty acids. Has increased ability to activate oleic and linoleic acid. May play a role in spermatogenesis. The polypeptide is Long-chain-fatty-acid--CoA ligase ACSBG2 (Homo sapiens (Human)).